A 409-amino-acid polypeptide reads, in one-letter code: Glucose-1-phosphate adenylyltransferase (409 aa).

Residues Gly-168, Glu-183–Lys-184, and Ser-201 contribute to the alpha-D-glucose 1-phosphate site.

It belongs to the bacterial/plant glucose-1-phosphate adenylyltransferase family. Homotetramer.

It carries out the reaction alpha-D-glucose 1-phosphate + ATP + H(+) = ADP-alpha-D-glucose + diphosphate. It functions in the pathway glycan biosynthesis; glycogen biosynthesis. Involved in the biosynthesis of ADP-glucose, a building block required for the elongation reactions to produce glycogen. Catalyzes the reaction between ATP and alpha-D-glucose 1-phosphate (G1P) to produce pyrophosphate and ADP-Glc. The sequence is that of Glucose-1-phosphate adenylyltransferase from Corynebacterium glutamicum (strain R).